Consider the following 300-residue polypeptide: UDP-N-acetylenolpyruvoylglucosamine reductase (300 aa).

In terms of domain architecture, FAD-binding PCMH-type spans 30–194 (KVGGAADFFV…VGATFRLDPA (165 aa)). Arg-174 is an active-site residue. Ser-223 functions as the Proton donor in the catalytic mechanism. Glu-293 is a catalytic residue.

It belongs to the MurB family. It depends on FAD as a cofactor.

It is found in the cytoplasm. The catalysed reaction is UDP-N-acetyl-alpha-D-muramate + NADP(+) = UDP-N-acetyl-3-O-(1-carboxyvinyl)-alpha-D-glucosamine + NADPH + H(+). It participates in cell wall biogenesis; peptidoglycan biosynthesis. Its function is as follows. Cell wall formation. The protein is UDP-N-acetylenolpyruvoylglucosamine reductase of Geobacter metallireducens (strain ATCC 53774 / DSM 7210 / GS-15).